The primary structure comprises 747 residues: Probable type III restriction-modification enzyme HindVI Mod subunit (747 aa).

The segment at 267-270 is binding of S-adenosyl methionine; sequence DPPY.

It belongs to the N(4)/N(6)-methyltransferase family. In terms of assembly, homodimer, also forms a functional restriction-competent complex with Res.

The catalysed reaction is a 2'-deoxyadenosine in DNA + S-adenosyl-L-methionine = an N(6)-methyl-2'-deoxyadenosine in DNA + S-adenosyl-L-homocysteine + H(+). Functionally, a beta subtype methylase that binds the system-specific DNA recognition site 5'-CGAAT-3' and methylates A-4 (of only 1 strand). DNA restriction requires both the Res and Mod subunits. In Haemophilus influenzae (strain ATCC 51907 / DSM 11121 / KW20 / Rd), this protein is Probable type III restriction-modification enzyme HindVI Mod subunit.